The primary structure comprises 356 residues: Caspase activity and apoptosis inhibitor 1 (356 aa).

Basic residues predominate over residues 1 to 14; sequence MTGKKSSREKRRKR. Disordered stretches follow at residues 1–24 and 54–80; these read MTGKKSSREKRRKRSGQEAAASLA and VAGGAERSERRKRRSTDSSSSVSGSLQ. Ser-68 is modified (phosphoserine). At Thr-69 the chain carries Phosphothreonine. A Glycyl lysine isopeptide (Lys-Gly) (interchain with G-Cter in SUMO2) cross-link involves residue Lys-84. 2 positions are modified to phosphoserine: Ser-100 and Ser-183. The segment at 208 to 234 is disordered; sequence DSTSSLRENKQPEVLESKQGKGEDSDV. Basic and acidic residues predominate over residues 214–231; that stretch reads RENKQPEVLESKQGKGED. Residues 276–306 are a coiled coil; sequence ENTVQSEAGQIDDLERDIEKSVNEILGLAES. Phosphoserine is present on Ser-307.

Functionally, anti-apoptotic protein that modulates a caspase-10 dependent mitochondrial caspase-3/9 feedback amplification loop. This Mus musculus (Mouse) protein is Caspase activity and apoptosis inhibitor 1 (Caap1).